We begin with the raw amino-acid sequence, 385 residues long: 4-hydroxy-3-methylbut-2-en-1-yl diphosphate synthase (flavodoxin) 1 (385 aa).

C280, C283, C315, and E322 together coordinate [4Fe-4S] cluster.

This sequence belongs to the IspG family. Requires [4Fe-4S] cluster as cofactor.

The enzyme catalyses (2E)-4-hydroxy-3-methylbut-2-enyl diphosphate + oxidized [flavodoxin] + H2O + 2 H(+) = 2-C-methyl-D-erythritol 2,4-cyclic diphosphate + reduced [flavodoxin]. Its pathway is isoprenoid biosynthesis; isopentenyl diphosphate biosynthesis via DXP pathway; isopentenyl diphosphate from 1-deoxy-D-xylulose 5-phosphate: step 5/6. Converts 2C-methyl-D-erythritol 2,4-cyclodiphosphate (ME-2,4cPP) into 1-hydroxy-2-methyl-2-(E)-butenyl 4-diphosphate. In Streptomyces avermitilis (strain ATCC 31267 / DSM 46492 / JCM 5070 / NBRC 14893 / NCIMB 12804 / NRRL 8165 / MA-4680), this protein is 4-hydroxy-3-methylbut-2-en-1-yl diphosphate synthase (flavodoxin) 1.